Here is a 212-residue protein sequence, read N- to C-terminus: tRNA (guanine-N(7)-)-methyltransferase (212 aa).

Positions 44, 69, 96, and 118 each coordinate S-adenosyl-L-methionine. Asp-118 is an active-site residue. Lys-122 contributes to the substrate binding site. Positions 124–129 are interaction with RNA; sequence RHEKRR. Residues Asp-154 and 191 to 194 each bind substrate; that span reads TEYE.

Belongs to the class I-like SAM-binding methyltransferase superfamily. TrmB family.

It catalyses the reaction guanosine(46) in tRNA + S-adenosyl-L-methionine = N(7)-methylguanosine(46) in tRNA + S-adenosyl-L-homocysteine. Its pathway is tRNA modification; N(7)-methylguanine-tRNA biosynthesis. Functionally, catalyzes the formation of N(7)-methylguanine at position 46 (m7G46) in tRNA. The polypeptide is tRNA (guanine-N(7)-)-methyltransferase (Streptococcus sanguinis (strain SK36)).